The following is a 409-amino-acid chain: UDP-N-acetylglucosamine--N-acetylmuramyl-(pentapeptide) pyrophosphoryl-undecaprenol N-acetylglucosamine transferase (409 aa).

UDP-N-acetyl-alpha-D-glucosamine-binding positions include 11-13, N125, R169, S199, and Q299; that span reads TGG.

The protein belongs to the glycosyltransferase 28 family. MurG subfamily.

It is found in the cell membrane. It catalyses the reaction di-trans,octa-cis-undecaprenyl diphospho-N-acetyl-alpha-D-muramoyl-L-alanyl-D-glutamyl-meso-2,6-diaminopimeloyl-D-alanyl-D-alanine + UDP-N-acetyl-alpha-D-glucosamine = di-trans,octa-cis-undecaprenyl diphospho-[N-acetyl-alpha-D-glucosaminyl-(1-&gt;4)]-N-acetyl-alpha-D-muramoyl-L-alanyl-D-glutamyl-meso-2,6-diaminopimeloyl-D-alanyl-D-alanine + UDP + H(+). It functions in the pathway cell wall biogenesis; peptidoglycan biosynthesis. Functionally, cell wall formation. Catalyzes the transfer of a GlcNAc subunit on undecaprenyl-pyrophosphoryl-MurNAc-pentapeptide (lipid intermediate I) to form undecaprenyl-pyrophosphoryl-MurNAc-(pentapeptide)GlcNAc (lipid intermediate II). The chain is UDP-N-acetylglucosamine--N-acetylmuramyl-(pentapeptide) pyrophosphoryl-undecaprenol N-acetylglucosamine transferase from Clostridioides difficile (strain 630) (Peptoclostridium difficile).